The chain runs to 103 residues: Small ribosomal subunit protein uS10 (103 aa).

Belongs to the universal ribosomal protein uS10 family. In terms of assembly, part of the 30S ribosomal subunit.

Involved in the binding of tRNA to the ribosomes. This chain is Small ribosomal subunit protein uS10, found in Neisseria gonorrhoeae (strain NCCP11945).